A 1197-amino-acid chain; its full sequence is DNA-directed RNA polymerase subunit beta (1197 aa).

Over residues 1172–1185 (KEQEEKKAQQEAEK) the composition is skewed to basic and acidic residues. Residues 1172 to 1197 (KEQEEKKAQQEAEKAQAASAEDPSAE) are disordered. Residues 1186–1197 (AQAASAEDPSAE) are compositionally biased toward low complexity.

It belongs to the RNA polymerase beta chain family. In terms of assembly, the RNAP catalytic core consists of 2 alpha, 1 beta, 1 beta' and 1 omega subunit. When a sigma factor is associated with the core the holoenzyme is formed, which can initiate transcription.

It carries out the reaction RNA(n) + a ribonucleoside 5'-triphosphate = RNA(n+1) + diphosphate. Functionally, DNA-dependent RNA polymerase catalyzes the transcription of DNA into RNA using the four ribonucleoside triphosphates as substrates. The protein is DNA-directed RNA polymerase subunit beta of Latilactobacillus sakei subsp. sakei (strain 23K) (Lactobacillus sakei subsp. sakei).